The following is a 367-amino-acid chain: Glutamate 5-kinase (367 aa).

Residue K8 participates in ATP binding. 3 residues coordinate substrate: S49, D136, and N148. ATP is bound by residues 168 to 169 (TD) and 210 to 216 (TGGMATK). One can recognise a PUA domain in the interval 275-353 (TGKLLLDAGA…DQIVQILGYE (79 aa)).

Belongs to the glutamate 5-kinase family.

The protein resides in the cytoplasm. It carries out the reaction L-glutamate + ATP = L-glutamyl 5-phosphate + ADP. The protein operates within amino-acid biosynthesis; L-proline biosynthesis; L-glutamate 5-semialdehyde from L-glutamate: step 1/2. Functionally, catalyzes the transfer of a phosphate group to glutamate to form L-glutamate 5-phosphate. In Synechococcus elongatus (strain ATCC 33912 / PCC 7942 / FACHB-805) (Anacystis nidulans R2), this protein is Glutamate 5-kinase.